We begin with the raw amino-acid sequence, 476 residues long: Siroheme synthase (476 aa).

The precorrin-2 dehydrogenase /sirohydrochlorin ferrochelatase stretch occupies residues 1-203 (MHYFPVFADL…RQTEAAKKEL (203 aa)). Residues 22–23 (GV) and 43–44 (QK) contribute to the NAD(+) site. At Ser128 the chain carries Phosphoserine. The segment at 214–476 (GFVSLVGAGP…LDSLRIESVA (263 aa)) is uroporphyrinogen-III C-methyltransferase. Pro223 contacts S-adenosyl-L-methionine. The Proton acceptor role is filled by Asp246. Lys268 functions as the Proton donor in the catalytic mechanism. S-adenosyl-L-methionine contacts are provided by residues 299–301 (GGD), Val304, 329–330 (TA), Met381, and Gly410.

The protein in the N-terminal section; belongs to the precorrin-2 dehydrogenase / sirohydrochlorin ferrochelatase family. In the C-terminal section; belongs to the precorrin methyltransferase family.

The enzyme catalyses uroporphyrinogen III + 2 S-adenosyl-L-methionine = precorrin-2 + 2 S-adenosyl-L-homocysteine + H(+). It carries out the reaction precorrin-2 + NAD(+) = sirohydrochlorin + NADH + 2 H(+). The catalysed reaction is siroheme + 2 H(+) = sirohydrochlorin + Fe(2+). It participates in cofactor biosynthesis; adenosylcobalamin biosynthesis; precorrin-2 from uroporphyrinogen III: step 1/1. The protein operates within cofactor biosynthesis; adenosylcobalamin biosynthesis; sirohydrochlorin from precorrin-2: step 1/1. Its pathway is porphyrin-containing compound metabolism; siroheme biosynthesis; precorrin-2 from uroporphyrinogen III: step 1/1. It functions in the pathway porphyrin-containing compound metabolism; siroheme biosynthesis; siroheme from sirohydrochlorin: step 1/1. It participates in porphyrin-containing compound metabolism; siroheme biosynthesis; sirohydrochlorin from precorrin-2: step 1/1. Functionally, multifunctional enzyme that catalyzes the SAM-dependent methylations of uroporphyrinogen III at position C-2 and C-7 to form precorrin-2 via precorrin-1. Then it catalyzes the NAD-dependent ring dehydrogenation of precorrin-2 to yield sirohydrochlorin. Finally, it catalyzes the ferrochelation of sirohydrochlorin to yield siroheme. The sequence is that of Siroheme synthase from Actinobacillus succinogenes (strain ATCC 55618 / DSM 22257 / CCUG 43843 / 130Z).